Reading from the N-terminus, the 263-residue chain is Complement control protein C3 (263 aa).

The first 19 residues, 1 to 19 (MKVESVTFLTLLGIGCVLS), serve as a signal peptide directing secretion. 4 Sushi domains span residues 20–83 (CCTI…QCIK), 84–145 (RRCP…ICES), 146–203 (VKCQ…TCQI), and 204–263 (VKCP…KCVR). Intrachain disulfides connect Cys21–Cys70, Cys54–Cys81, Cys86–Cys126, Cys112–Cys143, Cys148–Cys190, Cys176–Cys201, Cys206–Cys248, and Cys234–Cys261.

It belongs to the receptors of complement activation (RCA) family. As to quaternary structure, heterodimer with A56 protein; disulfide-linked.

The protein localises to the virion membrane. It is found in the host cell membrane. Its subcellular location is the secreted. In terms of biological role, serves to protect the virus against complement attack by inhibiting both classical and alternative pathways of complement activation. Binds C3b and C4b. In Vaccinia virus (strain Copenhagen) (VACV), this protein is Complement control protein C3.